A 260-amino-acid polypeptide reads, in one-letter code: tRNA pseudouridine synthase C (260 aa).

Residue Asp54 is part of the active site.

It belongs to the pseudouridine synthase RluA family.

The enzyme catalyses uridine(65) in tRNA = pseudouridine(65) in tRNA. Responsible for synthesis of pseudouridine from uracil-65 in transfer RNAs. In Salmonella typhimurium (strain LT2 / SGSC1412 / ATCC 700720), this protein is tRNA pseudouridine synthase C (truC).